The chain runs to 899 residues: Calcium-transporting ATPase 1 (899 aa).

Transmembrane regions (helical) follow at residues 59–79 (FVKD…VTLG), 80–100 (NIDD…VGFV), 247–267 (QLSL…FFQG), and 282–302 (VAAI…LGVL). Catalysis depends on aspartate 329, which acts as the 4-aspartylphosphate intermediate. A run of 4 helical transmembrane segments spans residues 688–708 (FQLS…VFGF), 757–777 (QLLQ…IVVF), 827–847 (FNIA…ASPF), and 854–874 (EAIG…VLWV). Serine 892 is modified (phosphoserine).

It belongs to the cation transport ATPase (P-type) (TC 3.A.3) family.

The protein resides in the endoplasmic reticulum membrane. It carries out the reaction Ca(2+)(in) + ATP + H2O = Ca(2+)(out) + ADP + phosphate + H(+). Its function is as follows. Transports calcium and manganese ions into the cell. Regulates cell morphogenesis through control of manganese and calcium homeostasis. The polypeptide is Calcium-transporting ATPase 1 (pmr1) (Schizosaccharomyces pombe (strain 972 / ATCC 24843) (Fission yeast)).